We begin with the raw amino-acid sequence, 193 residues long: dITP/XTP pyrophosphatase (193 aa).

7–12 (SENENK) is a binding site for substrate. Catalysis depends on D65, which acts as the Proton acceptor. D65 serves as a coordination point for Mg(2+). Substrate is bound by residues S66, 144 to 147 (FGYD), K167, and 172 to 173 (HR).

This sequence belongs to the HAM1 NTPase family. Homodimer. The cofactor is Mg(2+).

The enzyme catalyses XTP + H2O = XMP + diphosphate + H(+). It catalyses the reaction dITP + H2O = dIMP + diphosphate + H(+). The catalysed reaction is ITP + H2O = IMP + diphosphate + H(+). Pyrophosphatase that catalyzes the hydrolysis of nucleoside triphosphates to their monophosphate derivatives, with a high preference for the non-canonical purine nucleotides XTP (xanthosine triphosphate), dITP (deoxyinosine triphosphate) and ITP. Seems to function as a house-cleaning enzyme that removes non-canonical purine nucleotides from the nucleotide pool, thus preventing their incorporation into DNA/RNA and avoiding chromosomal lesions. This Tropheryma whipplei (strain Twist) (Whipple's bacillus) protein is dITP/XTP pyrophosphatase.